The primary structure comprises 614 residues: MSRGRSFIFYFVLFLFFGSSALYSQVTGDLAGDRQALLDFLNNIIHPRSLAWNTSSPVCTTWPGVTCDIDGTRVTALHLPGASLLGVIPPGTISRLSELQILSLRSNGLRGPFPIDFLQLKKLKAISLGNNRFSGPLPSDYATWTNLTVLDLYSNRFNGSIPAGFANLTGLVSLNLAKNSFSGEIPDLNLPGLRRLNFSNNNLTGSIPNSLKRFGNSAFSGNNLVFENAPPPAVVSFKEQKKNGIYISEPAILGIAISVCFVIFFVIAVVIIVCYVKRQRKSETEPKPDKLKLAKKMPSEKEVSKLGKEKNIEDMEDKSEINKVMFFEGSNLAFNLEDLLIASAEFLGKGVFGMTYKAVLEDSKVIAVKRLKDIVVSRKDFKHQMEIVGNIKHENVAPLRAYVCSKEEKLMVYDYDSNGSLSLRLHGKNADEGHVPLNWETRLRFMIGVAKGLGHIHTQNLAHGNIKSSNVFMNSEGYGCISEAGLPLLTNPVVRADSSARSVLRYRAPEVTDTRRSTPESDIYSFGILMLETLTGRSIMDDRKEGIDLVVWVNDVISKQWTGEVFDLELVKTPNVEAKLLQMLQLGTSCTAMVPAKRPDMVKVVETLEEIERD.

Positions Met1–Ala21 are cleaved as a signal peptide. Residues Leu22–Ala251 lie on the Extracellular side of the membrane. Asn53 carries an N-linked (GlcNAc...) asparagine glycan. LRR repeat units follow at residues Gly71–Arg95, Leu96–Leu120, Lys121–Asn146, Thr148–Asn167, Leu168–Leu190, and Pro191–Phe214. Residues Asn146, Asn158, and Asn167 are each glycosylated (N-linked (GlcNAc...) asparagine). Asn197 and Asn202 each carry an N-linked (GlcNAc...) asparagine glycan. The helical transmembrane segment at Ile252–Ile272 threads the bilayer. At Val273–Asp614 the chain is on the cytoplasmic side. The Protein kinase domain occupies Ile341 to Ile611. Ser343 bears the Phosphoserine mark. Residues Leu347–Thr355 and Lys369 contribute to the ATP site. Ser420 carries the phosphoserine modification. Phosphothreonine is present on residues Thr441, Thr514, and Thr591. An LRR 7 repeat occupies Ala578–Met601.

Belongs to the protein kinase superfamily. Ser/Thr protein kinase family.

The protein localises to the cell membrane. This is Inactive leucine-rich repeat receptor-like serine/threonine-protein kinase At5g24100 from Arabidopsis thaliana (Mouse-ear cress).